The primary structure comprises 692 residues: Methionine--tRNA ligase (692 aa).

The short motif at 12–22 (PYANGSFHIGH) is the 'HIGH' region element. Zn(2+) contacts are provided by cysteine 143, cysteine 146, cysteine 156, and cysteine 159. A 'KMSKS' region motif is present at residues 341-345 (KMSKS). An ATP-binding site is contributed by lysine 344. Residues 586 to 692 (DFAKIDLRIA…PGAQPGMRVR (107 aa)) enclose the tRNA-binding domain.

It belongs to the class-I aminoacyl-tRNA synthetase family. MetG type 1 subfamily. In terms of assembly, homodimer. The cofactor is Zn(2+).

The protein resides in the cytoplasm. The catalysed reaction is tRNA(Met) + L-methionine + ATP = L-methionyl-tRNA(Met) + AMP + diphosphate. Is required not only for elongation of protein synthesis but also for the initiation of all mRNA translation through initiator tRNA(fMet) aminoacylation. The sequence is that of Methionine--tRNA ligase from Bordetella parapertussis (strain 12822 / ATCC BAA-587 / NCTC 13253).